Here is a 348-residue protein sequence, read N- to C-terminus: Protein RecA (348 aa).

66 to 73 (GPESSGKT) is a binding site for ATP.

The protein belongs to the RecA family.

The protein localises to the cytoplasm. In terms of biological role, can catalyze the hydrolysis of ATP in the presence of single-stranded DNA, the ATP-dependent uptake of single-stranded DNA by duplex DNA, and the ATP-dependent hybridization of homologous single-stranded DNAs. It interacts with LexA causing its activation and leading to its autocatalytic cleavage. In Neisseria gonorrhoeae (strain NCCP11945), this protein is Protein RecA.